The chain runs to 255 residues: Zinc D-Ala-D-Ala carboxypeptidase (255 aa).

Residues 1–42 form the signal peptide; the sequence is MRPRPIRLLLTALVGAGLAFAPVSAVAAPTATASASADVGAL. Aspartate 43 is subject to Blocked amino end (Asp). 2 disulfides stabilise this stretch: cysteine 45-cysteine 123 and cysteine 136-cysteine 184. Substrate is bound at residue arginine 180. Histidine 196 is a Zn(2+) binding site. Cysteine 212 and cysteine 253 are oxidised to a cystine. Residue histidine 234 is the Proton donor of the active site. Histidine 237 and histidine 239 together coordinate Zn(2+).

It belongs to the peptidase M15 family. Zn(2+) serves as cofactor. Post-translationally, the N-terminus is partially blocked as a result of the cyclization of the first two amino acids into anhydroaspartylglycine imide.

The protein resides in the secreted. The catalysed reaction is Cleavage of the bond: (Ac)2-L-lysyl-D-alanyl-|-D-alanine.. This enzyme catalyzes carboxypeptidation and transpeptidation reactions involved in bacterial cell wall metabolism. It effectively catalyzes the transfer of the N-alpha, N-epsilon-diacetyl-L-lysyl-D-alanyl electrophilic group of the standard tripeptide substrate N-alpha,N-epsilon-diacetyl-L-lysyl-D-alanyl-D-alanine to water. It also performs a weak beta-lactamase activity, hydrolyzing penicillin into penicilloate at a very low rate. This Streptomyces albus G protein is Zinc D-Ala-D-Ala carboxypeptidase.